Reading from the N-terminus, the 99-residue chain is Aspartyl/glutamyl-tRNA(Asn/Gln) amidotransferase subunit C (99 aa).

It belongs to the GatC family. As to quaternary structure, heterotrimer of A, B and C subunits.

It catalyses the reaction L-glutamyl-tRNA(Gln) + L-glutamine + ATP + H2O = L-glutaminyl-tRNA(Gln) + L-glutamate + ADP + phosphate + H(+). The catalysed reaction is L-aspartyl-tRNA(Asn) + L-glutamine + ATP + H2O = L-asparaginyl-tRNA(Asn) + L-glutamate + ADP + phosphate + 2 H(+). Functionally, allows the formation of correctly charged Asn-tRNA(Asn) or Gln-tRNA(Gln) through the transamidation of misacylated Asp-tRNA(Asn) or Glu-tRNA(Gln) in organisms which lack either or both of asparaginyl-tRNA or glutaminyl-tRNA synthetases. The reaction takes place in the presence of glutamine and ATP through an activated phospho-Asp-tRNA(Asn) or phospho-Glu-tRNA(Gln). This Mycobacterium marinum (strain ATCC BAA-535 / M) protein is Aspartyl/glutamyl-tRNA(Asn/Gln) amidotransferase subunit C.